Consider the following 349-residue polypeptide: Histone-lysine N-methyltransferase ATXR6 (349 aa).

The tract at residues 1-28 (MVAVRRRRTQASNPRSEPPQHMSDHDSD) is disordered. The segment at 32-82 (DTVCEECSSGKQPAKLLLCDKCDKGFHLFCLRPILVSVPKGSWFCPSCSKH) adopts a PHD-type zinc-finger fold. The PIP motif motif lies at 92 to 99 (QTKIIDFF). The disordered stretch occupies residues 105–126 (PDSSQISSSSDSIGKKRKKTSL). A compositionally biased stretch (low complexity) spans 106 to 116 (DSSQISSSSDS). Substrate is bound at residue Met-190. The SET domain maps to 214 to 337 (PPLMVVFDPY…KGERLYYDYN (124 aa)). S-adenosyl-L-methionine contacts are provided by residues 224 to 226 (EGF) and 287 to 291 (RFISG). Substrate-binding positions include Arg-309 and 339-340 (YE). S-adenosyl-L-methionine is bound by residues Tyr-343 and Val-349.

This sequence belongs to the class V-like SAM-binding methyltransferase superfamily. Histone-lysine methyltransferase family. TRX/MLL subfamily. As to quaternary structure, interacts with PCNA1 and PCNA2. Interacts (via PHD domain) with HTR1 (via N-terminus). Interacts with IPS1. As to expression, expressed in leaves, roots, stems, flowers and siliques. Up-regulated in tissues where cell division is active.

The protein localises to the nucleus. The catalysed reaction is L-lysyl(27)-[histone H3] + S-adenosyl-L-methionine = N(6)-methyl-L-lysyl(27)-[histone H3] + S-adenosyl-L-homocysteine + H(+). Functionally, histone methyltransferase that specifically monomethylates 'Lys-27' of histone H3 (H3K27me1). Has higher activity on nucleosomes containing H3.1 than H3.3. Involved in the formation of constitutive heterochromatin and the silencing of heterochromatic elements. May act as a positive regulator of the G1-S transition. Influences which sets of rRNA gene variants are expressed or silenced. Up-regulated by E2FB. This is Histone-lysine N-methyltransferase ATXR6 (ATXR6) from Arabidopsis thaliana (Mouse-ear cress).